The sequence spans 110 residues: Large ribosomal subunit protein uL22 (110 aa).

The protein belongs to the universal ribosomal protein uL22 family. As to quaternary structure, part of the 50S ribosomal subunit.

Its function is as follows. This protein binds specifically to 23S rRNA; its binding is stimulated by other ribosomal proteins, e.g. L4, L17, and L20. It is important during the early stages of 50S assembly. It makes multiple contacts with different domains of the 23S rRNA in the assembled 50S subunit and ribosome. The globular domain of the protein is located near the polypeptide exit tunnel on the outside of the subunit, while an extended beta-hairpin is found that lines the wall of the exit tunnel in the center of the 70S ribosome. The sequence is that of Large ribosomal subunit protein uL22 from Photobacterium profundum (strain SS9).